A 212-amino-acid polypeptide reads, in one-letter code: Glycerol-3-phosphate acyltransferase (212 aa).

Helical transmembrane passes span 3–23 (ILLA…VVVS), 78–98 (DVAV…PVFF), 115–135 (AVHP…AFFF), and 155–177 (FLFG…LLVW).

The protein belongs to the PlsY family. Probably interacts with PlsX.

It is found in the cell inner membrane. The catalysed reaction is an acyl phosphate + sn-glycerol 3-phosphate = a 1-acyl-sn-glycero-3-phosphate + phosphate. Its pathway is lipid metabolism; phospholipid metabolism. In terms of biological role, catalyzes the transfer of an acyl group from acyl-phosphate (acyl-PO(4)) to glycerol-3-phosphate (G3P) to form lysophosphatidic acid (LPA). This enzyme utilizes acyl-phosphate as fatty acyl donor, but not acyl-CoA or acyl-ACP. The chain is Glycerol-3-phosphate acyltransferase from Burkholderia lata (strain ATCC 17760 / DSM 23089 / LMG 22485 / NCIMB 9086 / R18194 / 383).